The sequence spans 341 residues: DNA-directed RNA polymerase subunit alpha (341 aa).

The segment at 1–233 (MVREEVAGST…DLFLPFLHAE (233 aa)) is alpha N-terminal domain (alpha-NTD). Positions 269–341 (IPLNCIFIDQ…IDLLKNKLSF (73 aa)) are alpha C-terminal domain (alpha-CTD).

Belongs to the RNA polymerase alpha chain family. In plastids the minimal PEP RNA polymerase catalytic core is composed of four subunits: alpha, beta, beta', and beta''. When a (nuclear-encoded) sigma factor is associated with the core the holoenzyme is formed, which can initiate transcription.

It is found in the plastid. The protein localises to the chloroplast. The enzyme catalyses RNA(n) + a ribonucleoside 5'-triphosphate = RNA(n+1) + diphosphate. DNA-dependent RNA polymerase catalyzes the transcription of DNA into RNA using the four ribonucleoside triphosphates as substrates. The sequence is that of DNA-directed RNA polymerase subunit alpha from Lolium perenne (Perennial ryegrass).